The primary structure comprises 178 residues: Large ribosomal subunit protein uL6 (178 aa).

Belongs to the universal ribosomal protein uL6 family. In terms of assembly, part of the 50S ribosomal subunit.

Functionally, this protein binds to the 23S rRNA, and is important in its secondary structure. It is located near the subunit interface in the base of the L7/L12 stalk, and near the tRNA binding site of the peptidyltransferase center. In Desulfatibacillum aliphaticivorans, this protein is Large ribosomal subunit protein uL6.